The following is a 494-amino-acid chain: MQKKYVVALDQGTTSSRAIVFDHDANIVSVSQREFTQLYPNPGWVEHDPMEIWASQSSVLIEVLARAGIHSDEVAAIGITNQRETTVIWEKATGKPIYNAIVWQCRRSSEICEQLKAQGLEEYVRENTGLLLDPYFSGTKIKWILDNVPNARAQAERGELLFGTIDTWLVWKLTEGKVHVTDPTNAARTLLFNIHSLTWDNKLLEALNIPLSLLPEVKPSCSVYGTTRIAGEGSEIQVAGMAGDQQAALFGQLCVEPGMAKNTYGTGCFLLMNTGTKAVRSNHGLLTTVAVGPKGEVNYALEGSVFMGGATIQWLRDELGLIRDASDTEYFASKVADTNGVYLVPAFVGLGAPYWDPNARGAIFGLTRGANRNHIIRAALESIAYQSKDLLDAMTKDSGVSLKRLKVDGGAVANDFLMQFQADITDVEVLRPSVCETTALGAAFLAGLAVGFWESVIELEHKACIDKHFIPNIDAETRVRLYAGWQDAVARTRA.

An ADP-binding site is contributed by Thr-13. Residues Thr-13, Thr-14, and Ser-15 each contribute to the ATP site. Thr-13 serves as a coordination point for sn-glycerol 3-phosphate. Arg-17 lines the ADP pocket. Arg-83, Glu-84, Tyr-135, and Asp-244 together coordinate sn-glycerol 3-phosphate. Residues Arg-83, Glu-84, Tyr-135, Asp-244, and Gln-245 each contribute to the glycerol site. Thr-266 and Gly-309 together coordinate ADP. Positions 266, 309, 313, and 410 each coordinate ATP. ADP-binding residues include Gly-410 and Asn-414.

Belongs to the FGGY kinase family.

The catalysed reaction is glycerol + ATP = sn-glycerol 3-phosphate + ADP + H(+). The protein operates within polyol metabolism; glycerol degradation via glycerol kinase pathway; sn-glycerol 3-phosphate from glycerol: step 1/1. With respect to regulation, inhibited by fructose 1,6-bisphosphate (FBP). Functionally, key enzyme in the regulation of glycerol uptake and metabolism. Catalyzes the phosphorylation of glycerol to yield sn-glycerol 3-phosphate. The chain is Glycerol kinase from Shewanella baltica (strain OS195).